A 746-amino-acid polypeptide reads, in one-letter code: Ring assembly protein 3 (746 aa).

It localises to the cytoplasm. In terms of biological role, essential for actinomyosin ring assembly during cytokinesis. Has a role, in conjunction with F-actin, in assembling myosin II-containing proteins, such as myo2, at the division site. The chain is Ring assembly protein 3 (rng3) from Schizosaccharomyces pombe (strain 972 / ATCC 24843) (Fission yeast).